The sequence spans 315 residues: Transaldolase (315 aa).

Lys131 (schiff-base intermediate with substrate) is an active-site residue.

It belongs to the transaldolase family. Type 1 subfamily. In terms of assembly, homodimer.

The protein localises to the cytoplasm. It catalyses the reaction D-sedoheptulose 7-phosphate + D-glyceraldehyde 3-phosphate = D-erythrose 4-phosphate + beta-D-fructose 6-phosphate. The protein operates within carbohydrate degradation; pentose phosphate pathway; D-glyceraldehyde 3-phosphate and beta-D-fructose 6-phosphate from D-ribose 5-phosphate and D-xylulose 5-phosphate (non-oxidative stage): step 2/3. Its function is as follows. Transaldolase is important for the balance of metabolites in the pentose-phosphate pathway. The sequence is that of Transaldolase from Actinobacillus pleuropneumoniae serotype 3 (strain JL03).